A 245-amino-acid chain; its full sequence is 1-(5-phosphoribosyl)-5-[(5-phosphoribosylamino)methylideneamino] imidazole-4-carboxamide isomerase (245 aa).

The active-site Proton acceptor is the aspartate 8. The Proton donor role is filled by aspartate 130.

It belongs to the HisA/HisF family.

It localises to the cytoplasm. It catalyses the reaction 1-(5-phospho-beta-D-ribosyl)-5-[(5-phospho-beta-D-ribosylamino)methylideneamino]imidazole-4-carboxamide = 5-[(5-phospho-1-deoxy-D-ribulos-1-ylimino)methylamino]-1-(5-phospho-beta-D-ribosyl)imidazole-4-carboxamide. The protein operates within amino-acid biosynthesis; L-histidine biosynthesis; L-histidine from 5-phospho-alpha-D-ribose 1-diphosphate: step 4/9. This Azotobacter vinelandii (strain DJ / ATCC BAA-1303) protein is 1-(5-phosphoribosyl)-5-[(5-phosphoribosylamino)methylideneamino] imidazole-4-carboxamide isomerase.